Here is a 297-residue protein sequence, read N- to C-terminus: Mitochondrial nicotinamide adenine dinucleotide transporter SLC25A52 (297 aa).

Solcar repeat units follow at residues 28–108 (VGEM…LSCL), 116–200 (PEFA…IKEH), and 209–296 (AHLV…LLKF). Transmembrane regions (helical) follow at residues 34 to 51 (YLCGCCAAFNNVAITYPI), 85 to 105 (LPPLMQKTTTLALMFGLYEDL), 118 to 138 (FATHGVAAVLAGTAEAIFTPL), 179 to 199 (ILFRNGLSNVLFFGLRGPIKE), 215 to 235 (FIGGGLLGAMLGFLCFPINVV), and 268 to 289 (LFRGAHLNYHRSLISWGIINAT).

Belongs to the mitochondrial carrier (TC 2.A.29) family.

Its subcellular location is the mitochondrion inner membrane. The catalysed reaction is NAD(+)(in) = NAD(+)(out). Its function is as follows. Mitochondrial membrane carrier protein that mediates the import of NAD(+) into mitochondria. Compared to SLC25A51, SLC25A52-mediated transport is not essential for the import of NAD(+) in mitochondria. The transport mechanism, uniport or antiport, its electrogenicity and substrate selectivity, remain to be elucidated. The sequence is that of Mitochondrial nicotinamide adenine dinucleotide transporter SLC25A52 from Homo sapiens (Human).